The following is a 71-amino-acid chain: Small ribosomal subunit protein bS21 (71 aa).

The protein belongs to the bacterial ribosomal protein bS21 family.

The polypeptide is Small ribosomal subunit protein bS21 (Buchnera aphidicola subsp. Schizaphis graminum (strain Sg)).